The chain runs to 341 residues: Holliday junction branch migration complex subunit RuvB (341 aa).

Residues 1-182 (MTERFVTPDF…FGVICRLEFY (182 aa)) form a large ATPase domain (RuvB-L) region. ATP-binding positions include Leu21, Arg22, Gly63, Lys66, Thr67, Thr68, 129-131 (EDY), Arg172, Tyr182, and Arg219. Thr67 provides a ligand contact to Mg(2+). Residues 183 to 253 (TDDELATIAG…IADMALSRLE (71 aa)) form a small ATPAse domain (RuvB-S) region. The tract at residues 256–341 (NCGLDHMDRL…RGKTSGELFS (86 aa)) is head domain (RuvB-H). Residues Arg311 and Arg316 each contribute to the DNA site.

This sequence belongs to the RuvB family. Homohexamer. Forms an RuvA(8)-RuvB(12)-Holliday junction (HJ) complex. HJ DNA is sandwiched between 2 RuvA tetramers; dsDNA enters through RuvA and exits via RuvB. An RuvB hexamer assembles on each DNA strand where it exits the tetramer. Each RuvB hexamer is contacted by two RuvA subunits (via domain III) on 2 adjacent RuvB subunits; this complex drives branch migration. In the full resolvosome a probable DNA-RuvA(4)-RuvB(12)-RuvC(2) complex forms which resolves the HJ.

It is found in the cytoplasm. The catalysed reaction is ATP + H2O = ADP + phosphate + H(+). In terms of biological role, the RuvA-RuvB-RuvC complex processes Holliday junction (HJ) DNA during genetic recombination and DNA repair, while the RuvA-RuvB complex plays an important role in the rescue of blocked DNA replication forks via replication fork reversal (RFR). RuvA specifically binds to HJ cruciform DNA, conferring on it an open structure. The RuvB hexamer acts as an ATP-dependent pump, pulling dsDNA into and through the RuvAB complex. RuvB forms 2 homohexamers on either side of HJ DNA bound by 1 or 2 RuvA tetramers; 4 subunits per hexamer contact DNA at a time. Coordinated motions by a converter formed by DNA-disengaged RuvB subunits stimulates ATP hydrolysis and nucleotide exchange. Immobilization of the converter enables RuvB to convert the ATP-contained energy into a lever motion, pulling 2 nucleotides of DNA out of the RuvA tetramer per ATP hydrolyzed, thus driving DNA branch migration. The RuvB motors rotate together with the DNA substrate, which together with the progressing nucleotide cycle form the mechanistic basis for DNA recombination by continuous HJ branch migration. Branch migration allows RuvC to scan DNA until it finds its consensus sequence, where it cleaves and resolves cruciform DNA. The sequence is that of Holliday junction branch migration complex subunit RuvB from Syntrophotalea carbinolica (strain DSM 2380 / NBRC 103641 / GraBd1) (Pelobacter carbinolicus).